A 326-amino-acid polypeptide reads, in one-letter code: Metallophosphoesterase domain-containing protein 1 (326 aa).

This sequence belongs to the UPF0046 family.

May have metallophosphoesterase activity (in vitro). This chain is Metallophosphoesterase domain-containing protein 1 (Mpped1), found in Mus musculus (Mouse).